The chain runs to 172 residues: Translation initiation factor IF-3 (172 aa).

This sequence belongs to the IF-3 family. Monomer.

It localises to the cytoplasm. Its function is as follows. IF-3 binds to the 30S ribosomal subunit and shifts the equilibrium between 70S ribosomes and their 50S and 30S subunits in favor of the free subunits, thus enhancing the availability of 30S subunits on which protein synthesis initiation begins. The polypeptide is Translation initiation factor IF-3 (Campylobacter curvus (strain 525.92)).